The primary structure comprises 397 residues: Formate-dependent phosphoribosylglycinamide formyltransferase (397 aa).

N(1)-(5-phospho-beta-D-ribosyl)glycinamide contacts are provided by residues 21 to 22 and glutamate 81; that span reads EL. ATP is bound by residues arginine 113, lysine 154, 194–197, and glutamate 202; that span reads EEYV. The 196-residue stretch at 118–313 folds into the ATP-grasp domain; sequence KLAAEKVKVP…EFQIHVRSAL (196 aa). The Mg(2+) site is built by glutamate 272 and glutamate 284. N(1)-(5-phospho-beta-D-ribosyl)glycinamide contacts are provided by residues aspartate 291, lysine 361, and 368 to 369; that span reads RR.

This sequence belongs to the PurK/PurT family. As to quaternary structure, homodimer.

It catalyses the reaction N(1)-(5-phospho-beta-D-ribosyl)glycinamide + formate + ATP = N(2)-formyl-N(1)-(5-phospho-beta-D-ribosyl)glycinamide + ADP + phosphate + H(+). It functions in the pathway purine metabolism; IMP biosynthesis via de novo pathway; N(2)-formyl-N(1)-(5-phospho-D-ribosyl)glycinamide from N(1)-(5-phospho-D-ribosyl)glycinamide (formate route): step 1/1. Functionally, involved in the de novo purine biosynthesis. Catalyzes the transfer of formate to 5-phospho-ribosyl-glycinamide (GAR), producing 5-phospho-ribosyl-N-formylglycinamide (FGAR). Formate is provided by PurU via hydrolysis of 10-formyl-tetrahydrofolate. The chain is Formate-dependent phosphoribosylglycinamide formyltransferase from Sulfurisphaera tokodaii (strain DSM 16993 / JCM 10545 / NBRC 100140 / 7) (Sulfolobus tokodaii).